Here is a 119-residue protein sequence, read N- to C-terminus: Beta-2-microglobulin (119 aa).

An N-terminal signal peptide occupies residues Met1–Ala20. One can recognise an Ig-like C1-type domain in the interval Pro25 to Lys114. Cysteines 45 and 100 form a disulfide.

Belongs to the beta-2-microglobulin family. In terms of assembly, heterodimer of an alpha chain and a beta chain. Beta-2-microglobulin is the beta-chain of major histocompatibility complex class I molecules.

It localises to the secreted. In terms of biological role, component of the class I major histocompatibility complex (MHC). Involved in the presentation of peptide antigens to the immune system. This is Beta-2-microglobulin (B2M) from Ateles paniscus (Black spider monkey).